The sequence spans 348 residues: Dihydroorotase (348 aa).

Zn(2+) is bound by residues His-17 and His-19. Substrate-binding positions include 19-21 and Asn-45; that span reads HLR. Residues Lys-103, His-140, and His-178 each coordinate Zn(2+). Position 103 is an N6-carboxylysine (Lys-103). His-140 is a substrate binding site. Substrate is bound at residue Leu-223. Zn(2+) is bound at residue Asp-251. Asp-251 is an active-site residue. Residues His-255 and Ala-267 each coordinate substrate.

It belongs to the metallo-dependent hydrolases superfamily. DHOase family. Class II DHOase subfamily. As to quaternary structure, homodimer. The cofactor is Zn(2+). Co(2+) is required as a cofactor. It depends on Mg(2+) as a cofactor. Ni(2+) serves as cofactor.

The catalysed reaction is (S)-dihydroorotate + H2O = N-carbamoyl-L-aspartate + H(+). It functions in the pathway pyrimidine metabolism; UMP biosynthesis via de novo pathway; (S)-dihydroorotate from bicarbonate: step 3/3. In terms of biological role, catalyzes the reversible cyclization of carbamoyl aspartate to dihydroorotate. This is Dihydroorotase from Klebsiella pneumoniae subsp. pneumoniae (strain ATCC 700721 / MGH 78578).